A 911-amino-acid chain; its full sequence is Protein translocase subunit SecA (911 aa).

ATP-binding positions include glutamine 86, glycine 104 to threonine 108, and aspartate 512. Positions alanine 869–lysine 888 are disordered. Zn(2+)-binding residues include cysteine 895, cysteine 897, cysteine 906, and histidine 907.

The protein belongs to the SecA family. In terms of assembly, monomer and homodimer. Part of the essential Sec protein translocation apparatus which comprises SecA, SecYEG and auxiliary proteins SecDF-YajC and YidC. The cofactor is Zn(2+).

It is found in the cell inner membrane. The protein resides in the cytoplasm. It catalyses the reaction ATP + H2O + cellular proteinSide 1 = ADP + phosphate + cellular proteinSide 2.. Functionally, part of the Sec protein translocase complex. Interacts with the SecYEG preprotein conducting channel. Has a central role in coupling the hydrolysis of ATP to the transfer of proteins into and across the cell membrane, serving both as a receptor for the preprotein-SecB complex and as an ATP-driven molecular motor driving the stepwise translocation of polypeptide chains across the membrane. The polypeptide is Protein translocase subunit SecA (Bordetella parapertussis (strain 12822 / ATCC BAA-587 / NCTC 13253)).